Reading from the N-terminus, the 338-residue chain is uncharacterized protein (338 aa).

The first 29 residues, 1–29 (MIKQLYKNITICSLAISTALTVFPATSYA), serve as a signal peptide directing secretion.

Belongs to the aerolysin family.

This is an uncharacterized protein from Staphylococcus aureus (strain Mu50 / ATCC 700699).